The primary structure comprises 63 residues: Large ribosomal subunit protein uL30 (63 aa).

The protein belongs to the universal ribosomal protein uL30 family. Part of the 50S ribosomal subunit.

This is Large ribosomal subunit protein uL30 from Natranaerobius thermophilus (strain ATCC BAA-1301 / DSM 18059 / JW/NM-WN-LF).